Consider the following 734-residue polypeptide: Sulfate transporter (734 aa).

The segment covering 1–11 (MSLKNGEQNDL) has biased composition (polar residues). The tract at residues 1–38 (MSLKNGEQNDLSPKDSVKGNDQYRSPSGIHVEHEEESR) is disordered. Phosphoserine occurs at positions 12 and 16. A run of 2 helical transmembrane segments spans residues 113-133 (MMSG…YSLL) and 138-158 (PIYG…LGTS). N-linked (GlcNAc...) asparagine glycosylation is found at asparagine 194 and asparagine 204. A run of 8 helical transmembrane segments spans residues 222–242 (FVAG…VSVY), 247–267 (LLGG…VKYL), 269–289 (GLSL…IHIF), 292–312 (IHKT…VLLP), 379–399 (VDAI…SEMF), 415–435 (AIGF…SAAL), 453–473 (VMTA…FFSL), and 519–539 (LIST…CVIL). One can recognise an STAS domain in the interval 563-714 (AYKNLQAKSG…YSVYEAMTFA (152 aa)).

It belongs to the SLC26A/SulP transporter (TC 2.A.53) family. In terms of processing, N-glycosylated.

It localises to the cell membrane. The protein resides in the apical cell membrane. It catalyses the reaction oxalate(in) + sulfate(out) = oxalate(out) + sulfate(in). It carries out the reaction sulfate(out) + 2 chloride(in) = sulfate(in) + 2 chloride(out). The catalysed reaction is oxalate(out) + 2 chloride(in) = oxalate(in) + 2 chloride(out). The enzyme catalyses bromide(in) + chloride(out) = bromide(out) + chloride(in). It catalyses the reaction nitrate(in) + chloride(out) = nitrate(out) + chloride(in). It carries out the reaction iodide(in) + chloride(out) = iodide(out) + chloride(in). Sulfate transporter which mediates sulfate uptake into chondrocytes in order to maintain adequate sulfation of proteoglycans which is needed for cartilage development. Mediates electroneutral anion exchange of sulfate ions for oxalate ions, sulfate and oxalate ions for chloride and/or hydroxyl ions and chloride ions for bromide, iodide and nitrate ions. The coupling of sulfate transport to both hydroxyl and chloride ions likely serves to ensure transport at both acidic pH when most sulfate uptake is mediated by sulfate-hydroxide exchange and alkaline pH when most sulfate uptake is mediated by sulfate-chloride exchange. Essential for chondrocyte proliferation, differentiation and cell size expansion. This chain is Sulfate transporter (SLC26A2), found in Ovis aries (Sheep).